The chain runs to 354 residues: Deoxyribonuclease-2-beta (354 aa).

A signal peptide spans 1–22; sequence MTAKPLRTVLSLLFFALSGVLG. N-linked (GlcNAc...) asparagine glycans are attached at residues Asn70, Asn77, Asn95, Asn98, Asn114, Asn129, Asn208, Asn271, and Asn319.

The protein belongs to the DNase II family. In terms of tissue distribution, highly expressed in the eye lens. Detected in liver, but not in the other tissues tested.

The protein localises to the lysosome. It catalyses the reaction Endonucleolytic cleavage to nucleoside 3'-phosphates and 3'-phosphooligonucleotide end-products.. Hydrolyzes DNA under acidic conditions. Does not require divalent cations for activity. Participates in the degradation of nuclear DNA during lens cell differentiation. This Mus musculus (Mouse) protein is Deoxyribonuclease-2-beta (Dnase2b).